A 283-amino-acid chain; its full sequence is MPVSRYAVFGHPVAHSLSPAIHADFGKQTGIVLDYTAIDAPPEDFSAALQRFADGGGKGANVTLPLKEAACALASSLSDRARLAGAVNTLVRHEGQWQGENTDGIGLVRDLTDRHGLDLRGRRVLLLGAGGAARGVAPALLQAGITEMVVVNRSPERADALCDTLGEPGRVVSRYIEDLRDLGDFELIVNATAAGRDRDAGAFAMPLGLVNSLTAAVDLNYGATAIAFLAWARSAQCRYAIDGLGMLVEQAAESFALWHGVRPDTDPVYAALRAREAVLVSAD.

Shikimate contacts are provided by residues 16-18 and threonine 63; that span reads SLS. The active-site Proton acceptor is lysine 67. Aspartate 79 provides a ligand contact to NADP(+). Asparagine 88 and aspartate 103 together coordinate shikimate. NADP(+) is bound by residues 128–132, alanine 223, and glycine 243; that span reads GAGGA.

The protein belongs to the shikimate dehydrogenase family. In terms of assembly, homodimer.

It carries out the reaction shikimate + NADP(+) = 3-dehydroshikimate + NADPH + H(+). It participates in metabolic intermediate biosynthesis; chorismate biosynthesis; chorismate from D-erythrose 4-phosphate and phosphoenolpyruvate: step 4/7. Functionally, involved in the biosynthesis of the chorismate, which leads to the biosynthesis of aromatic amino acids. Catalyzes the reversible NADPH linked reduction of 3-dehydroshikimate (DHSA) to yield shikimate (SA). The sequence is that of Shikimate dehydrogenase (NADP(+)) from Xanthomonas oryzae pv. oryzae (strain MAFF 311018).